The sequence spans 577 residues: MNKVFDKLKPVFEAIAANKYISAIRDGFIACMPIIIFSSIFMMVAYVPNAWGFYWPDNVTNTLMVAYNYSMGLLALFVAGTTAKNLTDSKNLELPKTNQINPVAVIVASEISFVILSILPLKTGVDLTYMGTQGLICAYIVGLIVPNIYYVCIKNNVTIKLPEQVPGNIAQSFKDLIPMGLSVTAFWLFGVGFKAATGTVLPRWIIQVLSPLFQASDSYLGLALIAGAMAFFWFCGVQGPSIVQPAVVPIMIANTAANLQQYQAGQHVSHVLAMNTMDYVMNFGGTGATLVVPFIMLFAARSAQLKAVGKAAFVPCTFGVNEPVLFGMPIIMNPMLFIPFLATPIVNVCLFKFFVSVLGMNSMMYTMPWTVPGPIGILISTGFAPLAFVFVLLTLVLDVAIYFPFIRVYDSTLLAEEKAKEEVIEDDGMAVLASDTVSPSIPTGLTVATATDDDATHVLPETAPSAHGEAYFKQNEVDVLVLCAGGGTSGILANALNKLSKERGLKLSAAARAYGQDMDLIKDMNMVILAPQMESMKGNLKKITDKYGVKLVTTTGRQYIELTNNGDMALDFVESNL.

Positions 4 to 405 constitute a PTS EIIC type-3 domain; sequence VFDKLKPVFE…VLDVAIYFPF (402 aa). 9 helical membrane passes run 27–47, 63–83, 100–120, 133–153, 176–196, 219–239, 280–300, 326–346, and 386–406; these read GFIACMPIIIFSSIFMMVAYV, LMVAYNYSMGLLALFVAGTTA, INPVAVIVASEISFVILSILP, QGLICAYIVGLIVPNIYYVCI, LIPMGLSVTAFWLFGVGFKAA, YLGLALIAGAMAFFWFCGVQG, VMNFGGTGATLVVPFIMLFAA, FGMPIIMNPMLFIPFLATPIV, and LAFVFVLLTLVLDVAIYFPFI. Residues 476 to 577 enclose the PTS EIIB type-3 domain; that stretch reads EVDVLVLCAG…MALDFVESNL (102 aa). Cysteine 483 serves as the catalytic Phosphocysteine intermediate; for EIIB activity. Cysteine 483 is subject to Phosphocysteine; by EIIA.

It is found in the cell membrane. The catalysed reaction is lactose(out) + N(pros)-phospho-L-histidyl-[protein] = lactose 6-phosphate(in) + L-histidyl-[protein]. Functionally, the phosphoenolpyruvate-dependent sugar phosphotransferase system (sugar PTS), a major carbohydrate active transport system, catalyzes the phosphorylation of incoming sugar substrates concomitantly with their translocation across the cell membrane. The enzyme II LacEF PTS system is involved in lactose transport. This chain is PTS system lactose-specific EIICB component, found in Lacticaseibacillus casei (Lactobacillus casei).